A 105-amino-acid polypeptide reads, in one-letter code: Delta-hexatoxin-Mg1a (105 aa).

The first 18 residues, 1 to 18 (MKTLVIACVALVLVVVHG), serve as a signal peptide directing secretion. The propeptide occupies 19-60 (EVIEEVNEKQLQESVEEKYSLLQRLEKLDEAITAEENRNSRV). Disulfide bonds link C63-C77, C70-C82, C76-C93, and C78-C105.

Belongs to the neurotoxin 06 (delta-actx) family. Expressed by the venom gland.

Its subcellular location is the secreted. Its function is as follows. Selectively slows channel inactivation of mammalian Nav1.1/SCN1A, Nav1.3/SCN3A, and Nav1.6/SCN8A and shows higher affinity for insect Nav1/para channels (site 3). Induces tonic repetitive firing of nerve impulses in insect neurons accompanied by plateau potentials. The protein is Delta-hexatoxin-Mg1a of Macrothele gigas (Japanese funnel web spider).